Consider the following 119-residue polypeptide: Large ribosomal subunit protein bL12 (119 aa).

The protein belongs to the bacterial ribosomal protein bL12 family. As to quaternary structure, homodimer. Part of the ribosomal stalk of the 50S ribosomal subunit. Forms a multimeric L10(L12)X complex, where L10 forms an elongated spine to which 2 to 4 L12 dimers bind in a sequential fashion. Binds GTP-bound translation factors.

Functionally, forms part of the ribosomal stalk which helps the ribosome interact with GTP-bound translation factors. Is thus essential for accurate translation. In Bacillus anthracis (strain A0248), this protein is Large ribosomal subunit protein bL12.